The sequence spans 393 residues: Phospholipid-transporting ATPase accessory subunit CRF1 (393 aa).

Residues 1-46 (MGLILRWKEKKQLSSKQNAQKSRKPANTSFRQQRLKAWQPILSPQS) lie on the Cytoplasmic side of the membrane. A helical transmembrane segment spans residues 47–67 (VLPLLILMACVFAPIGIGLVV). Topologically, residues 68–334 (STISVQRLVV…NSIIGAGNEA (267 aa)) are lumenal. The confers specificity for binding DNF3 stretch occupies residues 70-332 (ISVQRLVVNY…TTNSIIGAGN (263 aa)). 7 N-linked (GlcNAc...) asparagine glycosylation sites follow: Asn-78, Asn-123, Asn-187, Asn-202, Asn-213, Asn-240, and Asn-291. 2 cysteine pairs are disulfide-bonded: Cys-82–Cys-126 and Cys-179–Cys-193. Residues 335–355 (LGIVYLIVAGIATLFAILFLI) traverse the membrane as a helical segment. Over 356 to 393 (KVIFKPRPMHDHSYLNFENSDTPFDESSVVSIPLREIL) the chain is Cytoplasmic.

This sequence belongs to the CDC50/LEM3 family. As to quaternary structure, component of a flippase complex consisting of DNF3 and YNR048W/CRF1. Interacts with DNF3; the interaction is direct and required for proper expression and endoplasmic reticulum (ER) export of either partner.

It localises to the golgi apparatus. The protein localises to the trans-Golgi network membrane. Its function is as follows. Accessory component of a P4-ATPase flippase complex which catalyzes the hydrolysis of ATP coupled to the transport of phosphatidylcholine and small amounts of phosphatidylethanolamine from the lumen to the cytosolic leaflet of the trans-Golgi network and ensures the maintenance of asymmetric distribution of phospholipids. May be involved in transport from early endosomes to the trans-Golgi network (TGN). The chain is Phospholipid-transporting ATPase accessory subunit CRF1 from Saccharomyces cerevisiae (strain ATCC 204508 / S288c) (Baker's yeast).